Consider the following 306-residue polypeptide: Agmatinase (306 aa).

Residues H126, D149, H151, D153, D230, and D232 each contribute to the Mn(2+) site.

Belongs to the arginase family. Agmatinase subfamily. Mn(2+) is required as a cofactor.

It catalyses the reaction agmatine + H2O = urea + putrescine. It functions in the pathway amine and polyamine biosynthesis; putrescine biosynthesis via agmatine pathway; putrescine from agmatine: step 1/1. Functionally, catalyzes the formation of putrescine from agmatine. This chain is Agmatinase, found in Shigella sonnei (strain Ss046).